The following is a 206-amino-acid chain: Small ribosomal subunit protein uS4 (206 aa).

The 63-residue stretch at 96 to 158 folds into the S4 RNA-binding domain; sequence SRLDNVVYRM…AKKQSRIKAA (63 aa).

It belongs to the universal ribosomal protein uS4 family. Part of the 30S ribosomal subunit. Contacts protein S5. The interaction surface between S4 and S5 is involved in control of translational fidelity.

Its function is as follows. One of the primary rRNA binding proteins, it binds directly to 16S rRNA where it nucleates assembly of the body of the 30S subunit. With S5 and S12 plays an important role in translational accuracy. The protein is Small ribosomal subunit protein uS4 of Wigglesworthia glossinidia brevipalpis.